The chain runs to 160 residues: MTNIRIGQGYDVHQLTEGRKLILGGVEIPFEKGLLGHSDADALLHAVTDALLGAAGLGDIGSHFPDTAAEFKDADSRVLLRAAYQSVQAQGWQAVNVDTTVIAQKPKLAPHIPQMRANIAADLGIDISCVNIKGKTNEKLGYLGRMEGIEAQAAVLLVRI.

A divalent metal cation-binding residues include Asp-11 and His-13. 4-CDP-2-C-methyl-D-erythritol 2-phosphate contacts are provided by residues 11–13 (DVH) and 37–38 (HS). Residue His-45 coordinates a divalent metal cation. 4-CDP-2-C-methyl-D-erythritol 2-phosphate-binding positions include 59–61 (DIG) and Arg-145.

This sequence belongs to the IspF family. In terms of assembly, homotrimer. A divalent metal cation serves as cofactor.

It catalyses the reaction 4-CDP-2-C-methyl-D-erythritol 2-phosphate = 2-C-methyl-D-erythritol 2,4-cyclic diphosphate + CMP. Its pathway is isoprenoid biosynthesis; isopentenyl diphosphate biosynthesis via DXP pathway; isopentenyl diphosphate from 1-deoxy-D-xylulose 5-phosphate: step 4/6. In terms of biological role, involved in the biosynthesis of isopentenyl diphosphate (IPP) and dimethylallyl diphosphate (DMAPP), two major building blocks of isoprenoid compounds. Catalyzes the conversion of 4-diphosphocytidyl-2-C-methyl-D-erythritol 2-phosphate (CDP-ME2P) to 2-C-methyl-D-erythritol 2,4-cyclodiphosphate (ME-CPP) with a corresponding release of cytidine 5-monophosphate (CMP). The polypeptide is 2-C-methyl-D-erythritol 2,4-cyclodiphosphate synthase (Neisseria meningitidis serogroup B (strain ATCC BAA-335 / MC58)).